Reading from the N-terminus, the 1007-residue chain is RNA-binding protein 26 (1007 aa).

Lysine 94 participates in a covalent cross-link: Glycyl lysine isopeptide (Lys-Gly) (interchain with G-Cter in SUMO2). Lysine 106 participates in a covalent cross-link: Glycyl lysine isopeptide (Lys-Gly) (interchain with G-Cter in SUMO1); alternate. A Glycyl lysine isopeptide (Lys-Gly) (interchain with G-Cter in SUMO2); alternate cross-link involves residue lysine 106. Residues 106 to 118 (KKEEITKEEEREK) show a composition bias toward basic and acidic residues. Positions 106-241 (KKEEITKEEE…YTPVSSVPSI (136 aa)) are disordered. Residue serine 127 is modified to Phosphoserine. The span at 134–168 (RYRENRSRDERKKDDRSRKRDYDRNPPRRDSYRDR) shows a compositional bias: basic and acidic residues. Over residues 169-186 (YNRRRGRSRSYSRSRSRS) the composition is skewed to basic residues. Basic and acidic residues-rich tracts occupy residues 187–201 (WSKE…DRSR) and 209–227 (RSRE…RTDP). Polar residues predominate over residues 228 to 241 (LENNYTPVSSVPSI). Residues 288–316 (PMPKKRCRDYDEKGFCMRGDMCPFDHGSD) form a C3H1-type zinc finger. The segment covering 334 to 388 (QPPVVEGPPPPGLPPPPPILTPPPVNLRPPVPPPGPLPPSLPPVTGPPPPLPPLQ) has biased composition (pro residues). Disordered regions lie at residues 334–404 (QPPV…SSVP) and 460–519 (IGLT…TNSP). Residues 394-404 (APPNSATSSVP) show a composition bias toward low complexity. Serine 496 carries the phosphoserine modification. Lysine 510 carries the N6-acetyllysine modification. The residue at position 518 (serine 518) is a Phosphoserine. Residues 532–606 (TKLELRKVPP…RFIKVYWHRE (75 aa)) form the RRM 1 domain. At serine 616 the chain carries Phosphoserine. Coiled coils occupy residues 719–795 (DNNE…KAAS) and 823–847 (KKMQ…EAAK). The interval 853-884 (SGRGRGIHSRGRGAVHGRGRGRGRGRGVPGHA) is disordered. The span at 857–877 (RGIHSRGRGAVHGRGRGRGRG) shows a compositional bias: basic residues. In terms of domain architecture, RRM 2 spans 891–960 (RALEISAFTE…QDLKLAWNKP (70 aa)). The segment at 966–1007 (AVETEEVEPDEEEFQEESLVDDSLLQDDDEEEEDNESRSWRR) is disordered. Over residues 968–1000 (ETEEVEPDEEEFQEESLVDDSLLQDDDEEEEDN) the composition is skewed to acidic residues.

Its function is as follows. May be involved in the turnover of nuclear polyadenylated (pA+) RNA. The sequence is that of RNA-binding protein 26 from Homo sapiens (Human).